The chain runs to 62 residues: Short neurotoxin 1 (62 aa).

Residues 1–16 (LECHNQQSIQTPTTTG) show a composition bias toward polar residues. The tract at residues 1-20 (LECHNQQSIQTPTTTGCSGG) is disordered. Intrachain disulfides connect Cys-3–Cys-24, Cys-17–Cys-41, Cys-43–Cys-54, and Cys-55–Cys-60.

Belongs to the three-finger toxin family. Short-chain subfamily. Type I alpha-neurotoxin sub-subfamily. Expressed by the venom gland.

It localises to the secreted. Functionally, binds to muscle nicotinic acetylcholine receptor (nAChR) and inhibit acetylcholine from binding to the receptor, thereby impairing neuromuscular transmission. This chain is Short neurotoxin 1, found in Naja kaouthia (Monocled cobra).